The primary structure comprises 143 residues: S-protein homolog 11 (143 aa).

The signal sequence occupies residues 1–20 (MNCFSFSFIIIVLCAGSSNA).

The protein belongs to the plant self-incompatibility (S1) protein family.

The protein resides in the secreted. The chain is S-protein homolog 11 from Arabidopsis thaliana (Mouse-ear cress).